Consider the following 201-residue polypeptide: IMP cyclohydrolase (201 aa).

Belongs to the archaeal IMP cyclohydrolase family.

It carries out the reaction IMP + H2O = 5-formamido-1-(5-phospho-D-ribosyl)imidazole-4-carboxamide. It participates in purine metabolism; IMP biosynthesis via de novo pathway; IMP from 5-formamido-1-(5-phospho-D-ribosyl)imidazole-4-carboxamide: step 1/1. Functionally, catalyzes the cyclization of 5-formylamidoimidazole-4-carboxamide ribonucleotide to IMP. The polypeptide is IMP cyclohydrolase (Methanococcus maripaludis (strain C7 / ATCC BAA-1331)).